Here is a 235-residue protein sequence, read N- to C-terminus: Repeat element protein (235 aa).

Residues 57-235 are repeat element; sequence IFQELLERLS…ARRKKCRFSQ (179 aa).

The chain is Repeat element protein from Campoletis sonorensis (CsIV).